The following is a 386-amino-acid chain: Prostatic acid phosphatase (386 aa).

The first 32 residues, 1-32 (MRAAPLLLARAASLSLGFLFLLFFWLDRSVLA), serve as a signal peptide directing secretion. Substrate is bound at residue R43. H44 acts as the Nucleophile in catalysis. R47 lines the substrate pocket. Residue N94 is glycosylated (N-linked (GlcNAc...) asparagine). R111 serves as a coordination point for substrate. Intrachain disulfides connect C161–C372, C215–C313, and C347–C351. N220 is a glycosylation site (N-linked (GlcNAc...) asparagine). H289 is a binding site for substrate. Residue D290 is the Proton donor of the active site. N333 is a glycosylation site (N-linked (GlcNAc...) asparagine).

This sequence belongs to the histidine acid phosphatase family. Homodimer; dimer formation is required for phosphatase activity. Post-translationally, N-glycosylated. High mannose content, partially sialylated and fucosylated biantennary complex. Also fucosylated with partially sialylated triantennary complex oligosaccharides. Proteolytically cleaved in seminal fluid to produce several peptides. Peptide PAPf39, the most prominent, forms amyloid beta-sheet fibrils, SEVI (semen-derived enhancer of viral infection). As to expression, highly expressed in the prostate, restricted to glandular and ductal epithelial cells. Also expressed in bladder, kidney, pancreas, lung, cervix, testis and ovary. Weak expression in a subset of pancreatic islet cells, squamous epithelia, the pilosebaceous unit, colonic neuroendocrine cells and skin adnexal structures. Low expression in prostate carcinoma cells and tissues. In terms of tissue distribution, widely expressed. Expressed in the sarcolemma of skeletal muscle.

It is found in the secreted. Its subcellular location is the cell membrane. The protein resides in the lysosome membrane. The protein localises to the nucleus. It localises to the cytoplasm. It is found in the cytosol. It carries out the reaction a phosphate monoester + H2O = an alcohol + phosphate. The enzyme catalyses 1-(9Z-octadecenoyl)-sn-glycero-3-phosphate + H2O = 1-(9Z-octadecenoyl)-sn-glycerol + phosphate. The catalysed reaction is a ribonucleoside 5'-phosphate + H2O = a ribonucleoside + phosphate. It catalyses the reaction O-phospho-L-tyrosyl-[protein] + H2O = L-tyrosyl-[protein] + phosphate. Phosphatase activity inhibited by L(+)-tartrate, and by its derivative, alpha-benzylaminobenzylphosphonic acid. A non-specific tyrosine phosphatase that dephosphorylates a diverse number of substrates under acidic conditions (pH 4-6) including alkyl, aryl, and acyl orthophosphate monoesters and phosphorylated proteins. Has lipid phosphatase activity and inactivates lysophosphatidic acid in seminal plasma. Functionally, tyrosine phosphatase that acts as a tumor suppressor of prostate cancer through dephosphorylation of ERBB2 and deactivation of MAPK-mediated signaling. In addition to its tyrosine phosphatase activity has ecto-5'-nucleotidase activity in dorsal root ganglion (DRG) neurons. Generates adenosine from AMP which acts as a pain suppressor. Its function is as follows. (Microbial infection) Forms amyloid beta-sheet fibrils in semen. These fibrils, termed SEVI (semen-derived enhancer of viral infection) capture HIV virions, attach them to target cells and enhance infection. SEVI amyloid fibrils are degraded by polyphenol epigallocatechin-3-gallate (EGCG), a constituent of green tea. Target cell attachment and enhancement of HIV infection is inhibited by surfen. Also similarly boosts XMRV (xenotropic murine leukemia virus-related virus) infection. This Homo sapiens (Human) protein is Prostatic acid phosphatase.